A 105-amino-acid polypeptide reads, in one-letter code: Phosphoribosyl-ATP pyrophosphatase (105 aa).

The protein belongs to the PRA-PH family.

Its subcellular location is the cytoplasm. The catalysed reaction is 1-(5-phospho-beta-D-ribosyl)-ATP + H2O = 1-(5-phospho-beta-D-ribosyl)-5'-AMP + diphosphate + H(+). Its pathway is amino-acid biosynthesis; L-histidine biosynthesis; L-histidine from 5-phospho-alpha-D-ribose 1-diphosphate: step 2/9. The chain is Phosphoribosyl-ATP pyrophosphatase from Ruegeria pomeroyi (strain ATCC 700808 / DSM 15171 / DSS-3) (Silicibacter pomeroyi).